Consider the following 412-residue polypeptide: Probable tRNA pseudouridine synthase D (412 aa).

The Nucleophile role is filled by Asp97. Residues 167-370 enclose the TRUD domain; that stretch reads ALPNYYGYQR…YGGYRKVVLT (204 aa).

The protein belongs to the pseudouridine synthase TruD family.

It carries out the reaction uridine(13) in tRNA = pseudouridine(13) in tRNA. Its function is as follows. Could be responsible for synthesis of pseudouridine from uracil-13 in transfer RNAs. This Pyrobaculum islandicum (strain DSM 4184 / JCM 9189 / GEO3) protein is Probable tRNA pseudouridine synthase D.